Reading from the N-terminus, the 51-residue chain is Large ribosomal subunit protein bL33 (51 aa).

This sequence belongs to the bacterial ribosomal protein bL33 family.

This chain is Large ribosomal subunit protein bL33, found in Francisella tularensis subsp. tularensis (strain FSC 198).